The chain runs to 342 residues: Holliday junction branch migration complex subunit RuvB (342 aa).

Residues 1 to 184 form a large ATPase domain (RuvB-L) region; it reads MDNERVITAV…FGIVQRLEFY (184 aa). ATP contacts are provided by residues I23, R24, G65, K68, T69, T70, 131–133, R174, Y184, and R221; that span reads EDY. T69 contributes to the Mg(2+) binding site. Positions 185–255 are small ATPAse domain (RuvB-S); sequence SVDDLSGIVS…IAQRALDMLE (71 aa). A head domain (RuvB-H) region spans residues 258 to 342; the sequence is SCGLDGTDRR…PRQDGDLFND (85 aa). 2 residues coordinate DNA: R313 and R318.

This sequence belongs to the RuvB family. As to quaternary structure, homohexamer. Forms an RuvA(8)-RuvB(12)-Holliday junction (HJ) complex. HJ DNA is sandwiched between 2 RuvA tetramers; dsDNA enters through RuvA and exits via RuvB. An RuvB hexamer assembles on each DNA strand where it exits the tetramer. Each RuvB hexamer is contacted by two RuvA subunits (via domain III) on 2 adjacent RuvB subunits; this complex drives branch migration. In the full resolvosome a probable DNA-RuvA(4)-RuvB(12)-RuvC(2) complex forms which resolves the HJ.

It is found in the cytoplasm. The catalysed reaction is ATP + H2O = ADP + phosphate + H(+). In terms of biological role, the RuvA-RuvB-RuvC complex processes Holliday junction (HJ) DNA during genetic recombination and DNA repair, while the RuvA-RuvB complex plays an important role in the rescue of blocked DNA replication forks via replication fork reversal (RFR). RuvA specifically binds to HJ cruciform DNA, conferring on it an open structure. The RuvB hexamer acts as an ATP-dependent pump, pulling dsDNA into and through the RuvAB complex. RuvB forms 2 homohexamers on either side of HJ DNA bound by 1 or 2 RuvA tetramers; 4 subunits per hexamer contact DNA at a time. Coordinated motions by a converter formed by DNA-disengaged RuvB subunits stimulates ATP hydrolysis and nucleotide exchange. Immobilization of the converter enables RuvB to convert the ATP-contained energy into a lever motion, pulling 2 nucleotides of DNA out of the RuvA tetramer per ATP hydrolyzed, thus driving DNA branch migration. The RuvB motors rotate together with the DNA substrate, which together with the progressing nucleotide cycle form the mechanistic basis for DNA recombination by continuous HJ branch migration. Branch migration allows RuvC to scan DNA until it finds its consensus sequence, where it cleaves and resolves cruciform DNA. This chain is Holliday junction branch migration complex subunit RuvB, found in Alcanivorax borkumensis (strain ATCC 700651 / DSM 11573 / NCIMB 13689 / SK2).